The chain runs to 148 residues: MPSRLRKTRKLRGHVSHGHGRIGKHRKHPGGRGNAGGMHHHRINFDKYHPGYFGKVGMRHYHLKRNQSFCPTVNLDKLWTLVSEQTRVNAAKNKTGVAPIIDVVRSGYYKVLGKGKLPKQPVIVKAKFFSRRAEEKIKGVGGACVLVA.

A compositionally biased stretch (basic residues) spans 1–30 (MPSRLRKTRKLRGHVSHGHGRIGKHRKHPG). A disordered region spans residues 1 to 37 (MPSRLRKTRKLRGHVSHGHGRIGKHRKHPGGRGNAGG). Residue histidine 39 is modified to (3S)-3-hydroxyhistidine. An N6-acetyllysine mark is found at lysine 47 and lysine 55. Serine 68 bears the Phosphoserine mark. The residue at position 110 (lysine 110) is an N6-acetyllysine.

The protein belongs to the universal ribosomal protein uL15 family. As to quaternary structure, component of the large ribosomal subunit. Hydroxylated on His-39 by MINA.

It localises to the cytoplasm. Component of the large ribosomal subunit. The ribosome is a large ribonucleoprotein complex responsible for the synthesis of proteins in the cell. The chain is Large ribosomal subunit protein uL15 (Rpl27a) from Mus musculus (Mouse).